A 997-amino-acid polypeptide reads, in one-letter code: Kinesin-like protein KIF19 (997 aa).

The 336-residue stretch at 11–346 folds into the Kinesin motor domain; sequence QLMVALRVRP…LTYAGRAKNI (336 aa). ATP is bound at residue 104–111; that stretch reads GPTGCGKT. Positions 361 to 388 form a coiled coil; it reads IAQYTSIIADLRGEIQRLKCKIDQQAGR. The span at 477–494 shows a compositional bias: basic and acidic residues; sequence EERRKESYTKEDSEKDSD. 4 disordered regions span residues 477–509, 665–704, 718–759, and 784–997; these read EERR…EVAS, KITP…GTDS, QVKS…SSEN, and AAQR…LQHN. The stretch at 506–551 forms a coiled coil; sequence EVASARENIAALVGEQKKLRKEKLALEQRCRELRARGRRLEETLPR. Polar residues predominate over residues 683 to 697; that stretch reads KTLSSEAQRPQNNTL. Residues 750–759 show a composition bias toward low complexity; that stretch reads INSSPESSEN. Polar residues-rich tracts occupy residues 835-851 and 950-959; these read TLQH…STGE and PNQNTGSGNP.

This sequence belongs to the TRAFAC class myosin-kinesin ATPase superfamily. Kinesin family. In terms of tissue distribution, strongly expressed in the oviduct and trachea. Expressed in testis, lung, ovary and brain.

Its subcellular location is the cytoplasm. It is found in the cytoskeleton. It localises to the cell projection. The protein resides in the cilium. Plus end-directed microtubule-dependent motor protein that regulates the length of motile cilia by mediating depolymerization of microtubules at ciliary tips. In Mus musculus (Mouse), this protein is Kinesin-like protein KIF19 (Kif19).